We begin with the raw amino-acid sequence, 298 residues long: GTPase Era (298 aa).

In terms of domain architecture, Era-type G spans 3-170 (KSGFVAILGR…IKLLTDNLEE (168 aa)). The G1 stretch occupies residues 11 to 18 (GRPNVGKS). 11-18 (GRPNVGKS) contributes to the GTP binding site. The G2 stretch occupies residues 37 to 41 (QTTRN). The segment at 58–61 (DTPG) is G3. GTP is bound by residues 58–62 (DTPGI) and 120–123 (NKID). The G4 stretch occupies residues 120–123 (NKID). Positions 149 to 151 (ISA) are G5. The KH type-2 domain maps to 201–279 (TQQEVPHSVA…YLETWVKVKK (79 aa)).

It belongs to the TRAFAC class TrmE-Era-EngA-EngB-Septin-like GTPase superfamily. Era GTPase family. As to quaternary structure, monomer.

The protein resides in the cytoplasm. The protein localises to the cell membrane. Functionally, an essential GTPase that binds both GDP and GTP, with rapid nucleotide exchange. Plays a role in 16S rRNA processing and 30S ribosomal subunit biogenesis and possibly also in cell cycle regulation and energy metabolism. In Streptococcus pyogenes serotype M3 (strain ATCC BAA-595 / MGAS315), this protein is GTPase Era.